The following is a 345-amino-acid chain: Methylthioribose-1-phosphate isomerase (345 aa).

Substrate-binding positions include 47–49, R90, and Q199; that span reads RGA. D240 acts as the Proton donor in catalysis. 250-251 serves as a coordination point for substrate; the sequence is NK.

This sequence belongs to the eIF-2B alpha/beta/delta subunits family. MtnA subfamily.

It carries out the reaction 5-(methylsulfanyl)-alpha-D-ribose 1-phosphate = 5-(methylsulfanyl)-D-ribulose 1-phosphate. It functions in the pathway amino-acid biosynthesis; L-methionine biosynthesis via salvage pathway; L-methionine from S-methyl-5-thio-alpha-D-ribose 1-phosphate: step 1/6. Catalyzes the interconversion of methylthioribose-1-phosphate (MTR-1-P) into methylthioribulose-1-phosphate (MTRu-1-P). This chain is Methylthioribose-1-phosphate isomerase, found in Crocosphaera subtropica (strain ATCC 51142 / BH68) (Cyanothece sp. (strain ATCC 51142)).